The following is a 297-amino-acid chain: MSCPPVRVLPVSLAPAQSLGSKDDSLYLDRSGPLDPSKPPLPPPQSTMARGLPINPSFPTRPTSGYHFPLKTAMNPQPAKQGPVFGRQGRGTSARMVTKKPDEDIYLECEPDPVPVLTRSLSSKALIPPVPLPRTSGLPKSVAGYQEARNGAMDGALKAGRRLSASSIAPALSSSVAENGSLLGQPWYSGNCDRQSVERALLHFQKDGAYKVRLSSGPHSSQPFTLAVLLRGRVFNIPIRQLDGGHHYALGREGRNHEELFSSVAAMVQHYTKHPLPLVDGHSGNRGLTYLRFPTKP.

Disordered regions lie at residues 1-61 (MSCP…FPTR) and 74-93 (MNPQPAKQGPVFGRQGRGTS). The span at 36–45 (PSKPPLPPPQ) shows a compositional bias: pro residues. Residues 187–295 (WYSGNCDRQS…RGLTYLRFPT (109 aa)) enclose the SH2 domain.

This chain is SH2 domain-containing protein 6 (Sh2d6), found in Mus musculus (Mouse).